The following is a 311-amino-acid chain: Linearmycin resistance ATP-binding protein LnrL (311 aa).

An ABC transporter domain is found at 2–232; that stretch reads LQAENIKKAY…LGGDTIIQLT (231 aa). 34–41 contributes to the ATP binding site; that stretch reads GPNGAGKS.

It belongs to the ABC transporter superfamily. The complex is composed of two ATP-binding proteins (LnrL) and two transmembrane proteins (LnrM and LnrN).

In terms of biological role, required for resistance to linearmycins, a family of antibiotic-specialized metabolites produced by some streptomycetes. Part of the ABC transporter complex LnrLMN that probably facilitates linearmycin removal from the membrane. Responsible for energy coupling to the transport system. Also mediates KinC-dependent biofilm morphology. This is Linearmycin resistance ATP-binding protein LnrL from Bacillus subtilis (strain 168).